A 182-amino-acid polypeptide reads, in one-letter code: MKFFIFTCLLAVALAKPKIEQSSSEETIAVSQEVSPNLENICSTACEEPIKNINEVEYVEVPTEIKDQEFYQKVNLLQYLQALYQYPTVMDPWTRAETKAIPFIRTMQYKQEKDATKHTSQKTELTEEEKAFLKYLDEMKQYYQKFVFPQYLKNAHHFQKTMNPWNHVKTIIYQSVPTLRYL.

An N-terminal signal peptide occupies residues 1-15 (MKFFIFTCLLAVALA). Phosphoserine is present on residues Ser-22, Ser-23, and Ser-24.

Belongs to the alpha-casein family. Mammary gland specific. Secreted in milk.

Its subcellular location is the secreted. Its function is as follows. Important role in the capacity of milk to transport calcium phosphate. The chain is Alpha-S2-casein (CSN1S2) from Oryctolagus cuniculus (Rabbit).